Reading from the N-terminus, the 138-residue chain is ATP synthase epsilon chain (138 aa).

Belongs to the ATPase epsilon chain family. As to quaternary structure, F-type ATPases have 2 components, CF(1) - the catalytic core - and CF(0) - the membrane proton channel. CF(1) has five subunits: alpha(3), beta(3), gamma(1), delta(1), epsilon(1). CF(0) has three main subunits: a, b and c.

The protein localises to the cell inner membrane. In terms of biological role, produces ATP from ADP in the presence of a proton gradient across the membrane. The polypeptide is ATP synthase epsilon chain (Cupriavidus necator (strain ATCC 17699 / DSM 428 / KCTC 22496 / NCIMB 10442 / H16 / Stanier 337) (Ralstonia eutropha)).